The following is a 601-amino-acid chain: Glutamine--tRNA ligase (601 aa).

The short motif at 76-86 (PEPNGYLHIGH) is the 'HIGH' region element. Residues 77–79 (EPN) and 83–89 (HIGHAKS) contribute to the ATP site. Residues Asp109 and Tyr253 each coordinate L-glutamine. Residues Thr272, 301-302 (RL), and 309-311 (MSK) each bind ATP. A 'KMSKS' region motif is present at residues 308-312 (VMSKR).

Belongs to the class-I aminoacyl-tRNA synthetase family. In terms of assembly, monomer.

The protein resides in the cytoplasm. The enzyme catalyses tRNA(Gln) + L-glutamine + ATP = L-glutaminyl-tRNA(Gln) + AMP + diphosphate. This is Glutamine--tRNA ligase from Rhodopirellula baltica (strain DSM 10527 / NCIMB 13988 / SH1).